The chain runs to 199 residues: Recombination protein RecR (199 aa).

The C4-type zinc finger occupies 58 to 73 (CSVCYGLADSDPCHIC). The 96-residue stretch at 81–176 (DVVCVVEQGT…KITRIASGVP (96 aa)) folds into the Toprim domain.

Belongs to the RecR family.

May play a role in DNA repair. It seems to be involved in an RecBC-independent recombinational process of DNA repair. It may act with RecF and RecO. The protein is Recombination protein RecR of Desulfatibacillum aliphaticivorans.